A 286-amino-acid polypeptide reads, in one-letter code: Bifunctional protein FolD (286 aa).

NADP(+) contacts are provided by residues 166–168 (GAS) and Ile232.

This sequence belongs to the tetrahydrofolate dehydrogenase/cyclohydrolase family. In terms of assembly, homodimer.

It carries out the reaction (6R)-5,10-methylene-5,6,7,8-tetrahydrofolate + NADP(+) = (6R)-5,10-methenyltetrahydrofolate + NADPH. It catalyses the reaction (6R)-5,10-methenyltetrahydrofolate + H2O = (6R)-10-formyltetrahydrofolate + H(+). It functions in the pathway one-carbon metabolism; tetrahydrofolate interconversion. Its function is as follows. Catalyzes the oxidation of 5,10-methylenetetrahydrofolate to 5,10-methenyltetrahydrofolate and then the hydrolysis of 5,10-methenyltetrahydrofolate to 10-formyltetrahydrofolate. This chain is Bifunctional protein FolD, found in Shewanella piezotolerans (strain WP3 / JCM 13877).